The sequence spans 48 residues: Cytochrome b559 subunit beta (48 aa).

A helical transmembrane segment spans residues 23–39 (WLAVHALAIPSVFFLGS). His-27 is a heme binding site.

Belongs to the PsbE/PsbF family. Heterodimer of an alpha subunit and a beta subunit. PSII is composed of 1 copy each of membrane proteins PsbA, PsbB, PsbC, PsbD, PsbE, PsbF, PsbH, PsbI, PsbJ, PsbK, PsbL, PsbM, PsbT, PsbX, PsbY, Psb30/Ycf12, peripheral proteins PsbO, CyanoQ (PsbQ), PsbU, PsbV and a large number of cofactors. It forms dimeric complexes. Heme b is required as a cofactor.

It localises to the cellular thylakoid membrane. In terms of biological role, this b-type cytochrome is tightly associated with the reaction center of photosystem II (PSII). PSII is a light-driven water:plastoquinone oxidoreductase that uses light energy to abstract electrons from H(2)O, generating O(2) and a proton gradient subsequently used for ATP formation. It consists of a core antenna complex that captures photons, and an electron transfer chain that converts photonic excitation into a charge separation. The sequence is that of Cytochrome b559 subunit beta from Prochlorococcus marinus (strain MIT 9301).